We begin with the raw amino-acid sequence, 1167 residues long: RNA-directed RNA polymerase (1167 aa).

The 183-residue stretch at 553 to 735 folds into the RdRp catalytic domain; sequence LTYGILAEAT…KALASYTGLE (183 aa).

The protein belongs to the reoviridae RNA-directed RNA polymerase family. Interacts with VP3 (Potential). Interacts with VP2 (Potential). Interacts with NSP5; this interaction is probably necessary for the formation of functional virus factories.

The protein resides in the virion. The catalysed reaction is RNA(n) + a ribonucleoside 5'-triphosphate = RNA(n+1) + diphosphate. Its function is as follows. RNA-directed RNA polymerase that is involved in both transcription and genome replication. Together with VP3 capping enzyme, forms an enzyme complex positioned near the channels situated at each of the five-fold vertices of the core. Following infection, the outermost layer of the virus is lost, leaving a double-layered particle (DLP) made up of the core and VP6 shell. VP1 then catalyzes the transcription of fully conservative plus-strand genomic RNAs that are extruded through the DLP's channels into the cytoplasm where they function as mRNAs for translation of viral proteins. One copy of each of the viral (+)RNAs is also recruited during core assembly, together with newly synthesized polymerase complexes and VP2. The polymerase of these novo-formed particles catalyzes the synthesis of complementary minus-strands leading to dsDNA formation. To do so, the polymerase specifically recognizes conserved 3' sequence(s) in plus-strand RNA templates. Once dsRNA synthesis is complete, the polymerase switches to the transcriptional mode, thus providing secondary transcription. This Rotavirus X (strain RVX/Human/China/NADRV-J19/1997/GXP[X]) (RV ADRV-N) protein is RNA-directed RNA polymerase.